The primary structure comprises 694 residues: Elongation factor G 1 (694 aa).

Positions 5-280 (SRYRNIGIFA…AVVDYLPDPT (276 aa)) constitute a tr-type G domain. GTP is bound by residues 14–21 (AHVDAGKT), 78–82 (DTPGH), and 132–135 (NKLD).

It belongs to the TRAFAC class translation factor GTPase superfamily. Classic translation factor GTPase family. EF-G/EF-2 subfamily.

The protein resides in the cytoplasm. Functionally, catalyzes the GTP-dependent ribosomal translocation step during translation elongation. During this step, the ribosome changes from the pre-translocational (PRE) to the post-translocational (POST) state as the newly formed A-site-bound peptidyl-tRNA and P-site-bound deacylated tRNA move to the P and E sites, respectively. Catalyzes the coordinated movement of the two tRNA molecules, the mRNA and conformational changes in the ribosome. The sequence is that of Elongation factor G 1 from Methylococcus capsulatus (strain ATCC 33009 / NCIMB 11132 / Bath).